The chain runs to 288 residues: Energy-coupling factor transporter ATP-binding protein EcfA2 (288 aa).

Residues 3 to 245 (IEFKNVDYIY…PDWLKKHFLD (243 aa)) form the ABC transporter domain. 40-47 (GHTGSGKS) contacts ATP.

This sequence belongs to the ABC transporter superfamily. Energy-coupling factor EcfA family. Forms a stable energy-coupling factor (ECF) transporter complex composed of 2 membrane-embedded substrate-binding proteins (S component), 2 ATP-binding proteins (A component) and 2 transmembrane proteins (T component).

The protein resides in the cell membrane. Functionally, ATP-binding (A) component of a common energy-coupling factor (ECF) ABC-transporter complex. Unlike classic ABC transporters this ECF transporter provides the energy necessary to transport a number of different substrates. This is Energy-coupling factor transporter ATP-binding protein EcfA2 from Lactobacillus gasseri (strain ATCC 33323 / DSM 20243 / BCRC 14619 / CIP 102991 / JCM 1131 / KCTC 3163 / NCIMB 11718 / NCTC 13722 / AM63).